Consider the following 1203-residue polypeptide: Regulator of telomere elongation helicase 1 (1203 aa).

One can recognise a Helicase ATP-binding domain in the interval 7–296 (NGVTVDFPFQ…ARVTQQGELQ (290 aa)). An ATP-binding site is contributed by 42–49 (SPTGTGKT). [4Fe-4S] cluster is bound by residues cysteine 145, cysteine 163, cysteine 172, and cysteine 207. The short motif at 151-167 (KKQESNHMQISLCRKKV) is the Nuclear localization signal element. The short motif at 250 to 253 (DEAH) is the DEAH box element. The Nuclear localization signal signature appears at 871–877 (QKGGRKK). Disordered regions lie at residues 998 to 1020 (QLDP…TSKG) and 1120 to 1203 (TTGK…RSKQ). Residues 1004–1020 (HLNQGQPHLSAHPTSKG) show a composition bias toward polar residues. Residues 1123–1134 (KDLELEGPRDES) are compositionally biased toward basic and acidic residues. The short motif at 1160 to 1167 (QSKISSFF) is the PIP-box element. Residues 1169–1181 (QRPDESVRSDDTT) are compositionally biased toward basic and acidic residues.

This sequence belongs to the helicase family. RAD3/XPD subfamily. Interacts with TERF1. Interacts (via PIP-box) with PCNA; the interaction is direct and essential for suppressing telomere fragility. Interacts with MMS19; the interaction mediates the association of RTEL1 with the cytosolic iron-sulfur protein assembly (CIA) complex. Widely expressed. Expressed in spleen, thymus, Peyer patches, kidney, and intestine. Not expressed in brain, heart, lung, skeletal muscles, skin and white fat. In the adult gonad, it is highly expressed in the testis, mainly in the spermatogonia and meiotic spermatocytes.

Its subcellular location is the nucleus. It catalyses the reaction ATP + H2O = ADP + phosphate + H(+). Its function is as follows. A probable ATP-dependent DNA helicase implicated in telomere-length regulation, DNA repair and the maintenance of genomic stability. Acts as an anti-recombinase to counteract toxic recombination and limit crossover during meiosis. Regulates meiotic recombination and crossover homeostasis by physically dissociating strand invasion events and thereby promotes noncrossover repair by meiotic synthesis dependent strand annealing (SDSA) as well as disassembly of D loop recombination intermediates. Also disassembles T loops and prevents telomere fragility by counteracting telomeric G4-DNA structures, which together ensure the dynamics and stability of the telomere. The protein is Regulator of telomere elongation helicase 1 of Mus musculus (Mouse).